Here is a 455-residue protein sequence, read N- to C-terminus: Kynurenine 3-monooxygenase (455 aa).

It belongs to the aromatic-ring hydroxylase family. KMO subfamily. FAD serves as cofactor.

The catalysed reaction is L-kynurenine + NADPH + O2 + H(+) = 3-hydroxy-L-kynurenine + NADP(+) + H2O. The protein operates within cofactor biosynthesis; NAD(+) biosynthesis; quinolinate from L-kynurenine: step 1/3. In terms of biological role, catalyzes the hydroxylation of L-kynurenine (L-Kyn) to form 3-hydroxy-L-kynurenine (L-3OHKyn). Required for synthesis of quinolinic acid. The sequence is that of Kynurenine 3-monooxygenase from Xanthomonas axonopodis pv. citri (strain 306).